The primary structure comprises 153 residues: Histone H2B.8 (153 aa).

2 stretches are compositionally biased toward basic and acidic residues: residues 1–28 (MAPKAEKKPAAKKPAEEEPAAEKAEKAP) and 36–53 (EKRLPAGKGEKGSGEGKK). The disordered stretch occupies residues 1–61 (MAPKAEKKPA…KKAGRKKAKK (61 aa)). Residues lysine 7 and lysine 37 each carry the N6-acetyllysine modification. Residue lysine 149 forms a Glycyl lysine isopeptide (Lys-Gly) (interchain with G-Cter in ubiquitin) linkage.

Belongs to the histone H2B family. The nucleosome is a histone octamer containing two molecules each of H2A, H2B, H3 and H4 assembled in one H3-H4 heterotetramer and two H2A-H2B heterodimers. The octamer wraps approximately 147 bp of DNA. Post-translationally, can be acetylated to form H2BK6ac and H2BK33ac. Monoubiquitinated by BRE1 to form H2BK143ub1 and deubiquitinated by UBP26. Required for heterochromatic histone H3 di- and trimethylation at H3K4me. May give a specific tag for epigenetic transcriptional activation.

It localises to the nucleus. It is found in the chromosome. Its function is as follows. Core component of nucleosome. Nucleosomes wrap and compact DNA into chromatin, limiting DNA accessibility to the cellular machineries which require DNA as a template. Histones thereby play a central role in transcription regulation, DNA repair, DNA replication and chromosomal stability. DNA accessibility is regulated via a complex set of post-translational modifications of histones, also called histone code, and nucleosome remodeling. The polypeptide is Histone H2B.8 (H2B.8) (Oryza sativa subsp. indica (Rice)).